Consider the following 420-residue polypeptide: Tyrosine--tRNA ligase 2 (420 aa).

Tyr34 is a binding site for L-tyrosine. Positions 39 to 48 (PTGDSMHIGH) match the 'HIGH' region motif. Positions 168 and 172 each coordinate L-tyrosine. The 'KMSKS' region signature appears at 230–234 (KFGKS). Lys233 is a binding site for ATP. The region spanning 352 to 418 (KNIVEWLVDL…GKKNYSLVKL (67 aa)) is the S4 RNA-binding domain.

The protein belongs to the class-I aminoacyl-tRNA synthetase family. TyrS type 1 subfamily. As to quaternary structure, homodimer.

It localises to the cytoplasm. It carries out the reaction tRNA(Tyr) + L-tyrosine + ATP = L-tyrosyl-tRNA(Tyr) + AMP + diphosphate + H(+). Catalyzes the attachment of tyrosine to tRNA(Tyr) in a two-step reaction: tyrosine is first activated by ATP to form Tyr-AMP and then transferred to the acceptor end of tRNA(Tyr). The sequence is that of Tyrosine--tRNA ligase 2 from Bacillus cereus (strain ATCC 14579 / DSM 31 / CCUG 7414 / JCM 2152 / NBRC 15305 / NCIMB 9373 / NCTC 2599 / NRRL B-3711).